The chain runs to 249 residues: Ubiquinone biosynthesis O-methyltransferase (249 aa).

Positions 41, 72, 93, and 136 each coordinate S-adenosyl-L-methionine.

The protein belongs to the methyltransferase superfamily. UbiG/COQ3 family.

It catalyses the reaction a 3-demethylubiquinol + S-adenosyl-L-methionine = a ubiquinol + S-adenosyl-L-homocysteine + H(+). The enzyme catalyses a 3-(all-trans-polyprenyl)benzene-1,2-diol + S-adenosyl-L-methionine = a 2-methoxy-6-(all-trans-polyprenyl)phenol + S-adenosyl-L-homocysteine + H(+). The protein operates within cofactor biosynthesis; ubiquinone biosynthesis. O-methyltransferase that catalyzes the 2 O-methylation steps in the ubiquinone biosynthetic pathway. This is Ubiquinone biosynthesis O-methyltransferase from Methylobacterium nodulans (strain LMG 21967 / CNCM I-2342 / ORS 2060).